A 643-amino-acid polypeptide reads, in one-letter code: 3D-(3,5/4)-trihydroxycyclohexane-1,2-dione hydrolase (643 aa).

Residue E65 participates in thiamine diphosphate binding. Residues 441 to 521 form a thiamine pyrophosphate binding region; that stretch reads SLPGDLQRMW…VNVLLFDNCG (81 aa). Mg(2+)-binding residues include D492 and N519.

It belongs to the TPP enzyme family. It depends on Mg(2+) as a cofactor. Requires thiamine diphosphate as cofactor.

The enzyme catalyses 3D-3,5/4-trihydroxycyclohexane-1,2-dione + H2O = 5-deoxy-D-glucuronate + H(+). It participates in polyol metabolism; myo-inositol degradation into acetyl-CoA; acetyl-CoA from myo-inositol: step 3/7. In terms of biological role, involved in the cleavage of the C1-C2 bond of 3D-(3,5/4)-trihydroxycyclohexane-1,2-dione (THcHDO) to yield 5-deoxy-glucuronate (5DG). The sequence is that of 3D-(3,5/4)-trihydroxycyclohexane-1,2-dione hydrolase from Clostridium botulinum (strain Eklund 17B / Type B).